The primary structure comprises 290 residues: Bifunctional protein FolD 3 (290 aa).

Residues 163-165 and Ile-229 contribute to the NADP(+) site; that span reads GHS.

This sequence belongs to the tetrahydrofolate dehydrogenase/cyclohydrolase family. In terms of assembly, homodimer.

The catalysed reaction is (6R)-5,10-methylene-5,6,7,8-tetrahydrofolate + NADP(+) = (6R)-5,10-methenyltetrahydrofolate + NADPH. The enzyme catalyses (6R)-5,10-methenyltetrahydrofolate + H2O = (6R)-10-formyltetrahydrofolate + H(+). Its pathway is one-carbon metabolism; tetrahydrofolate interconversion. Catalyzes the oxidation of 5,10-methylenetetrahydrofolate to 5,10-methenyltetrahydrofolate and then the hydrolysis of 5,10-methenyltetrahydrofolate to 10-formyltetrahydrofolate. In Roseobacter denitrificans (strain ATCC 33942 / OCh 114) (Erythrobacter sp. (strain OCh 114)), this protein is Bifunctional protein FolD 3.